A 451-amino-acid polypeptide reads, in one-letter code: UDP-N-acetylmuramoylalanine--D-glutamate ligase (451 aa).

ATP is bound at residue Gly-119 to Thr-125.

Belongs to the MurCDEF family.

The protein resides in the cytoplasm. The catalysed reaction is UDP-N-acetyl-alpha-D-muramoyl-L-alanine + D-glutamate + ATP = UDP-N-acetyl-alpha-D-muramoyl-L-alanyl-D-glutamate + ADP + phosphate + H(+). It participates in cell wall biogenesis; peptidoglycan biosynthesis. Its function is as follows. Cell wall formation. Catalyzes the addition of glutamate to the nucleotide precursor UDP-N-acetylmuramoyl-L-alanine (UMA). This chain is UDP-N-acetylmuramoylalanine--D-glutamate ligase, found in Streptococcus mutans serotype c (strain ATCC 700610 / UA159).